Consider the following 1444-residue polypeptide: Probable serine/threonine-protein kinase irlC (1444 aa).

Positions 335–370 (TLINNNNNNNNNNNNNNNNNNNNNNNNNNNNNNNSK) are disordered. The span at 338–368 (NNNNNNNNNNNNNNNNNNNNNNNNNNNNNNN) shows a compositional bias: low complexity. An SWIM-type zinc finger spans residues 495–529 (FTFYLSFGEIFTCSCEDYKREFSCKHMFFILLNYY). The segment covering 584–613 (TSPFQSINNNNNNNLNNNNNNNLNNNNNNE) has biased composition (low complexity). 2 disordered regions span residues 584 to 619 (TSPFQSINNNNNNNLNNNNNNNLNNNNNNENENKFK) and 864 to 938 (QKEK…ITPI). Coiled-coil stretches lie at residues 593 to 620 (NNNNNLNNNNNNNLNNNNNNENENKFKE) and 847 to 879 (IKAEQYLLEQELLEKKKQKEKKKQKQKQSKSKI). Basic residues predominate over residues 864 to 876 (QKEKKKQKQKQSK). A compositionally biased stretch (low complexity) spans 885 to 937 (SSSSSSSSSPSTSNTTITSTTPTTTTTTTTTTTPTTTTTTTTTSSPKQKPITP). Residues 981 to 1246 (RKEENVLGRG…IEKILLHPFF (266 aa)) form the Protein kinase domain. ATP is bound by residues 987–995 (LGRGSNGTL) and lysine 1010. Aspartate 1116 functions as the Proton acceptor in the catalytic mechanism. A KEN domain is found at 1279 to 1444 (NYQEINLKNN…LIYFNDLIIK (166 aa)).

The protein belongs to the protein kinase superfamily. Ser/Thr protein kinase family.

It carries out the reaction L-seryl-[protein] + ATP = O-phospho-L-seryl-[protein] + ADP + H(+). The catalysed reaction is L-threonyl-[protein] + ATP = O-phospho-L-threonyl-[protein] + ADP + H(+). This Dictyostelium discoideum (Social amoeba) protein is Probable serine/threonine-protein kinase irlC (irlC).